Reading from the N-terminus, the 194-residue chain is Peptidyl-tRNA hydrolase (194 aa).

Residue Y16 participates in tRNA binding. The active-site Proton acceptor is the H21. 3 residues coordinate tRNA: F67, N69, and N115.

Belongs to the PTH family. In terms of assembly, monomer.

The protein resides in the cytoplasm. It carries out the reaction an N-acyl-L-alpha-aminoacyl-tRNA + H2O = an N-acyl-L-amino acid + a tRNA + H(+). In terms of biological role, hydrolyzes ribosome-free peptidyl-tRNAs (with 1 or more amino acids incorporated), which drop off the ribosome during protein synthesis, or as a result of ribosome stalling. Its function is as follows. Catalyzes the release of premature peptidyl moieties from peptidyl-tRNA molecules trapped in stalled 50S ribosomal subunits, and thus maintains levels of free tRNAs and 50S ribosomes. This Colwellia psychrerythraea (strain 34H / ATCC BAA-681) (Vibrio psychroerythus) protein is Peptidyl-tRNA hydrolase.